A 76-amino-acid chain; its full sequence is Putative defensin-like protein 184 (76 aa).

An N-terminal signal peptide occupies residues 1–21 (MKNSSILFVLIIVVFLISSSG). 4 disulfides stabilise this stretch: Cys-32–Cys-76, Cys-38–Cys-58, Cys-44–Cys-70, and Cys-48–Cys-72.

Belongs to the DEFL family.

It is found in the secreted. The protein is Putative defensin-like protein 184 (LCR18) of Arabidopsis thaliana (Mouse-ear cress).